The primary structure comprises 140 residues: Organic hydroperoxide resistance protein-like (140 aa).

It belongs to the OsmC/Ohr family.

The sequence is that of Organic hydroperoxide resistance protein-like from Staphylococcus aureus (strain MSSA476).